A 3232-amino-acid chain; its full sequence is D-lysergyl-peptide-synthetase subunit 1 (3232 aa).

The adenylation (A) domain 1 stretch occupies residues 90 to 474 (GCLTYDEMSI…LGRKDDQVKI (385 aa)). One can recognise a Carrier 1 domain in the interval 617-686 (REKLLQGCFA…TLREIVIVST (70 aa)). Serine 649 is subject to O-(pantetheine 4'-phosphoryl)serine. Positions 731 to 1122 (EDIYPCTHLQ…EHILTQIHSN (392 aa)) are condensation (C) domain 1. The tract at residues 1165–1572 (QAKCQAQPDA…RRKDAQVKIR (408 aa)) is adenylation (A) domain 2. One can recognise a Carrier 2 domain in the interval 1717 to 1785 (TEHEISAIWA…TIRKLALARG (69 aa)). An O-(pantetheine 4'-phosphoryl)serine modification is found at serine 1749. Positions 1835 to 2252 (ERIYPCSPIQ…ALPVLDEDQM (418 aa)) are condensation (C) domain 2. The segment at 2276–2675 (QQCLRCPDSP…GRNDDQVKVR (400 aa)) is adenylation (A) domain 3. One can recognise a Carrier 3 domain in the interval 2810–2878 (MEAELQRLVG…RVSDLARIVE (69 aa)). Serine 2842 bears the O-(pantetheine 4'-phosphoryl)serine mark. The segment at 2943-3218 (LYFSKPVASE…LLHWLHQQHI (276 aa)) is cyclization (Cyc) domain.

Belongs to the NRP synthetase family.

Its pathway is alkaloid biosynthesis; ergot alkaloid biosynthesis. Functionally, D-lysergyl-peptide-synthetase subunit 1; part of the gene cluster that mediates the biosynthesis of fungal ergot alkaloid. DmaW catalyzes the first step of ergot alkaloid biosynthesis by condensing dimethylallyl diphosphate (DMAP) and tryptophan to form 4-dimethylallyl-L-tryptophan. The second step is catalyzed by the methyltransferase easF that methylates 4-dimethylallyl-L-tryptophan in the presence of S-adenosyl-L-methionine, resulting in the formation of 4-dimethylallyl-L-abrine. The catalase easC and the FAD-dependent oxidoreductase easE then transform 4-dimethylallyl-L-abrine to chanoclavine-I which is further oxidized by easD in the presence of NAD(+), resulting in the formation of chanoclavine-I aldehyde. Agroclavine dehydrogenase easG then mediates the conversion of chanoclavine-I aldehyde to agroclavine via a non-enzymatic adduct reaction: the substrate is an iminium intermediate that is formed spontaneously from chanoclavine-I aldehyde in the presence of glutathione. The presence of easA is not required to complete this reaction. Further conversion of agroclavine to paspalic acid is a two-step process involving oxidation of agroclavine to elymoclavine and of elymoclavine to paspalic acid, the second step being performed by the elymoclavine oxidase cloA. Paspalic acid is then further converted to D-lysergic acid. Ergopeptines are assembled from D-lysergic acid and three different amino acids by the D-lysergyl-peptide-synthetases composed each of a monomudular and a trimodular nonribosomal peptide synthetase subunit. LpsB and lpsC encode the monomodular subunits responsible for D-lysergic acid activation and incorporation into the ergopeptine backbone. LpsA1 and A2 subunits encode the trimodular nonribosomal peptide synthetase assembling the tripeptide portion of ergopeptines. LpsA1 is responsible for formation of the major ergopeptine, ergotamine, and lpsA2 for alpha-ergocryptine, the minor ergopeptine of the total alkaloid mixture elaborated by C.purpurea. D-lysergyl-tripeptides are assembled by the nonribosomal peptide synthetases and released as N-(D-lysergyl-aminoacyl)-lactams. Cyclolization of the D-lysergyl-tripeptides is performed by the Fe(2+)/2-ketoglutarate-dependent dioxygenase easH which introduces a hydroxyl group into N-(D-lysergyl-aminoacyl)-lactam at alpha-C of the aminoacyl residue followed by spontaneous condensation with the terminal lactam carbonyl group. This chain is D-lysergyl-peptide-synthetase subunit 1, found in Claviceps purpurea (Ergot fungus).